A 546-amino-acid chain; its full sequence is CTP synthase (546 aa).

An amidoligase domain region spans residues 1–267; it reads MTKFIFVTGG…AEQVLDILQL (267 aa). Residue Ser13 coordinates CTP. Residue Ser13 participates in UTP binding. 14–19 is an ATP binding site; sequence SIGKGI. Tyr54 contacts L-glutamine. Asp71 contributes to the ATP binding site. Asp71 and Glu141 together coordinate Mg(2+). CTP-binding positions include 148–150, 188–193, and Lys224; these read DIE and KTKPTQ. Residues 188–193 and Lys224 each bind UTP; that span reads KTKPTQ. Residues 292–534 form the Glutamine amidotransferase type-1 domain; sequence EVAIVGKYVR…IKAALGSDLT (243 aa). Residue Gly354 participates in L-glutamine binding. The Nucleophile; for glutamine hydrolysis role is filled by Cys381. Residues 382–385, Glu405, and Arg462 contribute to the L-glutamine site; that span reads LGMQ. Active-site residues include His507 and Glu509.

Belongs to the CTP synthase family. As to quaternary structure, homotetramer.

The catalysed reaction is UTP + L-glutamine + ATP + H2O = CTP + L-glutamate + ADP + phosphate + 2 H(+). It catalyses the reaction L-glutamine + H2O = L-glutamate + NH4(+). The enzyme catalyses UTP + NH4(+) + ATP = CTP + ADP + phosphate + 2 H(+). It participates in pyrimidine metabolism; CTP biosynthesis via de novo pathway; CTP from UDP: step 2/2. Allosterically activated by GTP, when glutamine is the substrate; GTP has no effect on the reaction when ammonia is the substrate. The allosteric effector GTP functions by stabilizing the protein conformation that binds the tetrahedral intermediate(s) formed during glutamine hydrolysis. Inhibited by the product CTP, via allosteric rather than competitive inhibition. Functionally, catalyzes the ATP-dependent amination of UTP to CTP with either L-glutamine or ammonia as the source of nitrogen. Regulates intracellular CTP levels through interactions with the four ribonucleotide triphosphates. This Synechococcus sp. (strain ATCC 27144 / PCC 6301 / SAUG 1402/1) (Anacystis nidulans) protein is CTP synthase.